The chain runs to 367 residues: Ribosomal RNA large subunit methyltransferase M (367 aa).

Residues Ser-189, 222-225 (CPGG), Asp-241, Asp-261, and Asp-278 contribute to the S-adenosyl-L-methionine site. Catalysis depends on Lys-307, which acts as the Proton acceptor.

This sequence belongs to the class I-like SAM-binding methyltransferase superfamily. RNA methyltransferase RlmE family. RlmM subfamily. In terms of assembly, monomer.

Its subcellular location is the cytoplasm. It carries out the reaction cytidine(2498) in 23S rRNA + S-adenosyl-L-methionine = 2'-O-methylcytidine(2498) in 23S rRNA + S-adenosyl-L-homocysteine + H(+). In terms of biological role, catalyzes the 2'-O-methylation at nucleotide C2498 in 23S rRNA. The chain is Ribosomal RNA large subunit methyltransferase M from Shewanella denitrificans (strain OS217 / ATCC BAA-1090 / DSM 15013).